The primary structure comprises 377 residues: Succinyl-diaminopimelate desuccinylase (377 aa).

Zn(2+) is bound at residue His-75. The active site involves Asp-77. Asp-106 is a Zn(2+) binding site. Glu-136 functions as the Proton acceptor in the catalytic mechanism. The Zn(2+) site is built by Glu-137, Glu-165, and His-350.

The protein belongs to the peptidase M20A family. DapE subfamily. As to quaternary structure, homodimer. The cofactor is Zn(2+). Requires Co(2+) as cofactor.

The catalysed reaction is N-succinyl-(2S,6S)-2,6-diaminopimelate + H2O = (2S,6S)-2,6-diaminopimelate + succinate. The protein operates within amino-acid biosynthesis; L-lysine biosynthesis via DAP pathway; LL-2,6-diaminopimelate from (S)-tetrahydrodipicolinate (succinylase route): step 3/3. Catalyzes the hydrolysis of N-succinyl-L,L-diaminopimelic acid (SDAP), forming succinate and LL-2,6-diaminopimelate (DAP), an intermediate involved in the bacterial biosynthesis of lysine and meso-diaminopimelic acid, an essential component of bacterial cell walls. The protein is Succinyl-diaminopimelate desuccinylase of Sphingopyxis alaskensis (strain DSM 13593 / LMG 18877 / RB2256) (Sphingomonas alaskensis).